An 843-amino-acid polypeptide reads, in one-letter code: General transcription and DNA repair factor IIH helicase/translocase subunit XPB/SSL2 (843 aa).

The interval 1–85 is disordered; it reads MTDVEGYQPK…TAADSSMNQM (85 aa). Residues 26–41 are compositionally biased toward acidic residues; sequence SDEDSPATDAEIDENY. Residues 42 to 56 show a composition bias toward basic and acidic residues; sequence DDNRETSEGRGERDT. Over residues 64–74 the composition is skewed to basic residues; the sequence is KKPRKKTKSSR. The short motif at 64 to 75 is the Nuclear localization signal element; sequence KKPRKKTKSSRH. The Helicase ATP-binding domain maps to 373–535; sequence MFGNGRARSG…DLNFLIGPKL (163 aa). 386 to 393 serves as a coordination point for ATP; sequence LPCGAGKT. A DEAH box motif is present at residues 488–491; it reads DEVH. One can recognise a Helicase C-terminal domain in the interval 589–743; it reads QACQFLIQYH…KVITHLHGME (155 aa). Ser752 carries the post-translational modification Phosphoserine.

It belongs to the helicase family. RAD25/XPB subfamily. In terms of assembly, component of the 7-subunit TFIIH core complex composed of XPB/SSL2, XPD/RAD3, SSL1, TFB1, TFB2, TFB4 and TFB5, which is active in NER. The core complex associates with the 3-subunit CTD-kinase module TFIIK composed of CCL1, KIN28 and TFB3 to form the 10-subunit holoenzyme (holo-TFIIH) active in transcription. An additionnal subunit, TFB6, plays a role in the dissociation of the SSL2 helicase from TFIIH after transcription initiation. Interacts directly with TFB6. Mg(2+) serves as cofactor.

The protein resides in the nucleus. It carries out the reaction Couples ATP hydrolysis with the unwinding of duplex DNA by translocating in the 3'-5' direction.. The enzyme catalyses ATP + H2O = ADP + phosphate + H(+). In terms of biological role, ATP-dependent DNA translocase. Component of the general transcription and DNA repair factor IIH (TFIIH) core complex. When complexed to CDK-activating kinase (CAK), involved in RNA transcription by RNA polymerase II. May have 3'-5' helicase activity alone, the TFIIH core however has no 3'-5' helicase activity. Also involved in transcription-coupled nucleotide excision repair (NER) of damaged DNA. In NER, TFIIH acts by opening DNA around the lesion to allow the excision of the damaged oligonucleotide and its replacement by a new DNA fragment. The ATPase activity of XPB/SSL2, but not its helicase activity, is required for DNA opening. In transcription, TFIIH has an essential role in transcription initiation. When the pre-initiation complex (PIC) has been established, TFIIH is required for promoter opening and promoter escape. The ATP-dependent helicase activity of XPB/SSL2 is required for promoter opening and promoter escape. XPB/SSL2 acts as a double-stranded DNA translocase, promoting DNA opening by tracking in a 5'-3' dirction along the nontemplate promoter strand, rotating and inserting DNA into the Pol II active site cleft, leading to DNA unwinding. A dsDNA-stimulated ATPase, dATP and ATP are equally good substrates. May also use this translocase mechanism during DNA repair rather than physically wedging open damaged DNA. This is General transcription and DNA repair factor IIH helicase/translocase subunit XPB/SSL2 from Saccharomyces cerevisiae (strain ATCC 204508 / S288c) (Baker's yeast).